An 88-amino-acid chain; its full sequence is Small cysteine and glycine repeat-containing protein 1 (88 aa).

The interval 4–72 (CGCGGCGGCG…TCSSCGYSCG (69 aa)) is 10 X 2 AA repeats of CG.

It belongs to the KRTAP type 28 family.

In terms of biological role, in the hair cortex, hair keratin intermediate filaments are embedded in an interfilamentous matrix, consisting of hair keratin-associated proteins (KRTAP), which are essential for the formation of a rigid and resistant hair shaft through their extensive disulfide bond cross-linking with abundant cysteine residues of hair keratins. The matrix proteins include the high-sulfur and high-glycine-tyrosine keratins. This chain is Small cysteine and glycine repeat-containing protein 1, found in Homo sapiens (Human).